Here is a 181-residue protein sequence, read N- to C-terminus: Peptide deformylase (181 aa).

Fe cation contacts are provided by Cys-103 and His-145. Residue Glu-146 is part of the active site. Fe cation is bound at residue His-149.

It belongs to the polypeptide deformylase family. Requires Fe(2+) as cofactor.

The catalysed reaction is N-terminal N-formyl-L-methionyl-[peptide] + H2O = N-terminal L-methionyl-[peptide] + formate. Functionally, removes the formyl group from the N-terminal Met of newly synthesized proteins. Requires at least a dipeptide for an efficient rate of reaction. N-terminal L-methionine is a prerequisite for activity but the enzyme has broad specificity at other positions. This Orientia tsutsugamushi (strain Boryong) (Rickettsia tsutsugamushi) protein is Peptide deformylase.